Reading from the N-terminus, the 397-residue chain is Acetyl-CoA acetyltransferase (397 aa).

The active-site Acyl-thioester intermediate is cysteine 95. CoA is bound by residues tyrosine 187 and lysine 230. Tyrosine 187 provides a ligand contact to K(+). Alanine 246, glycine 247, and alanine 249 together coordinate K(+). Serine 250 is a CoA binding site. Valine 347 is a binding site for K(+). Catalysis depends on proton acceptor residues histidine 351 and cysteine 379.

It belongs to the thiolase-like superfamily. Thiolase family.

It is found in the peroxisome. The catalysed reaction is 2 acetyl-CoA = acetoacetyl-CoA + CoA. Essential for n-decane utilization. This Yarrowia lipolytica (strain CLIB 122 / E 150) (Yeast) protein is Acetyl-CoA acetyltransferase (PAT1).